Consider the following 317-residue polypeptide: Membrane-associated protein VIPP1, chloroplastic (317 aa).

The stretch at 92–246 (EMNDDLTKMR…SQAEALGQLA (155 aa)) forms a coiled coil. Positions 265 to 317 (DLAQMKKEISGSSSKGELPPGRTAVSNSGAARPFRDIEIENELNELRKKANEY) are disordered. Basic and acidic residues predominate over residues 297-317 (PFRDIEIENELNELRKKANEY).

This sequence belongs to the PspA/Vipp/IM30 family. As to quaternary structure, homomultimer. Complex formation involves interaction via the central alpha-helical domain (71-286). (Microbial infection) Interacts with the rice tungro bacilliform virus (RTBV) capsid protein.

Its subcellular location is the plastid. The protein localises to the chloroplast inner membrane. It is found in the chloroplast thylakoid membrane. Functionally, required for plastid vesicle formation and thylakoid membrane biogenesis, but not for functional assembly of thylakoid protein complexes. In Oryza sativa subsp. japonica (Rice), this protein is Membrane-associated protein VIPP1, chloroplastic.